Consider the following 772-residue polypeptide: DnaJ homolog subfamily C member 16 (772 aa).

An N-terminal signal peptide occupies residues methionine 1–alanine 25. Over leucine 26–glutamate 533 the chain is Cytoplasmic. The region spanning aspartate 29–glycine 93 is the J domain. One can recognise a Thioredoxin domain in the interval phenylalanine 119–proline 245. The helical; Anchor for type IV membrane protein transmembrane segment at methionine 534–valine 554 threads the bilayer. Residues glutamine 555–aspartate 772 are Extracellular-facing. The disordered stretch occupies residues serine 560–serine 591. Over residues asparagine 561 to lysine 580 the composition is skewed to basic and acidic residues. A glycan (N-linked (GlcNAc...) asparagine) is linked at asparagine 629.

It is found in the endoplasmic reticulum membrane. Its function is as follows. Plays an important role in regulating the size of autophagosomes during the formation process. This Mus musculus (Mouse) protein is DnaJ homolog subfamily C member 16 (Dnajc16).